The chain runs to 247 residues: MSNEFIYGIHAVKAVLEREPERFIEAYVLKGRQDDRLMPILNDLQVCGVSIQQMTRKTLDDKAHGANHQGIIARVKVAKQLNENDIDDILAQHETPLLLVLDGVTDPHNLGACLRNADAAGVAAIIVPKDRSAPMNATVSKVACGAAEVVPLIRVTNLARTMRTLQEQGIWFVGTAGEATHDIYQAKLTGPLAIVMGAEGDGMRRLTRETCDDLIKIPMAGSVSSLNVSVASGICLFEAVRQRLAAK.

Positions 197, 217, and 226 each coordinate S-adenosyl-L-methionine.

This sequence belongs to the class IV-like SAM-binding methyltransferase superfamily. RNA methyltransferase TrmH family. RlmB subfamily.

The protein localises to the cytoplasm. The catalysed reaction is guanosine(2251) in 23S rRNA + S-adenosyl-L-methionine = 2'-O-methylguanosine(2251) in 23S rRNA + S-adenosyl-L-homocysteine + H(+). Specifically methylates the ribose of guanosine 2251 in 23S rRNA. In Vibrio parahaemolyticus serotype O3:K6 (strain RIMD 2210633), this protein is 23S rRNA (guanosine-2'-O-)-methyltransferase RlmB.